Here is a 230-residue protein sequence, read N- to C-terminus: Ureidoacrylate amidohydrolase RutB (230 aa).

Asp-24 serves as the catalytic Proton acceptor. Lys-133 is an active-site residue. Cys-166 (nucleophile) is an active-site residue.

This sequence belongs to the isochorismatase family. RutB subfamily.

The enzyme catalyses (Z)-3-ureidoacrylate + H2O + H(+) = (Z)-3-aminoacrylate + NH4(+) + CO2. The catalysed reaction is (Z)-3-ureidoacrylate + H2O = (Z)-3-aminoacrylate + carbamate + H(+). It catalyses the reaction (Z)-2-methylureidoacrylate + H2O + H(+) = (Z)-2-methylaminoacrylate + NH4(+) + CO2. In terms of biological role, hydrolyzes ureidoacrylate to form aminoacrylate and carbamate. The carbamate hydrolyzes spontaneously, thereby releasing one of the nitrogen atoms of the pyrimidine ring as ammonia and one of its carbon atoms as CO2. The polypeptide is Ureidoacrylate amidohydrolase RutB (Escherichia coli O7:K1 (strain IAI39 / ExPEC)).